Reading from the N-terminus, the 201-residue chain is 3-isopropylmalate dehydratase small subunit (201 aa).

Belongs to the LeuD family. LeuD type 1 subfamily. In terms of assembly, heterodimer of LeuC and LeuD.

The catalysed reaction is (2R,3S)-3-isopropylmalate = (2S)-2-isopropylmalate. The protein operates within amino-acid biosynthesis; L-leucine biosynthesis; L-leucine from 3-methyl-2-oxobutanoate: step 2/4. Functionally, catalyzes the isomerization between 2-isopropylmalate and 3-isopropylmalate, via the formation of 2-isopropylmaleate. This is 3-isopropylmalate dehydratase small subunit from Salmonella schwarzengrund (strain CVM19633).